The sequence spans 544 residues: Chaperonin GroEL (544 aa).

ATP is bound by residues 29–32 (TLGP), 86–90 (DGTTT), G413, 476–478 (NAL), and D492.

The protein belongs to the chaperonin (HSP60) family. In terms of assembly, forms a cylinder of 14 subunits composed of two heptameric rings stacked back-to-back. Interacts with the co-chaperonin GroES.

It is found in the cytoplasm. It catalyses the reaction ATP + H2O + a folded polypeptide = ADP + phosphate + an unfolded polypeptide.. Together with its co-chaperonin GroES, plays an essential role in assisting protein folding. The GroEL-GroES system forms a nano-cage that allows encapsulation of the non-native substrate proteins and provides a physical environment optimized to promote and accelerate protein folding. This is Chaperonin GroEL from Desulfitobacterium hafniense (strain Y51).